Reading from the N-terminus, the 306-residue chain is Homoserine kinase (306 aa).

91 to 101 (PLARGLGSSAA) lines the ATP pocket.

It belongs to the GHMP kinase family. Homoserine kinase subfamily.

The protein localises to the cytoplasm. The enzyme catalyses L-homoserine + ATP = O-phospho-L-homoserine + ADP + H(+). Its pathway is amino-acid biosynthesis; L-threonine biosynthesis; L-threonine from L-aspartate: step 4/5. Functionally, catalyzes the ATP-dependent phosphorylation of L-homoserine to L-homoserine phosphate. This is Homoserine kinase from Bacillus licheniformis (strain ATCC 14580 / DSM 13 / JCM 2505 / CCUG 7422 / NBRC 12200 / NCIMB 9375 / NCTC 10341 / NRRL NRS-1264 / Gibson 46).